The primary structure comprises 1399 residues: DNA-directed RNA polymerase subunit beta' (1399 aa).

4 residues coordinate Zn(2+): Cys-70, Cys-72, Cys-85, and Cys-88. Mg(2+) contacts are provided by Asp-460, Asp-462, and Asp-464. Zn(2+) contacts are provided by Cys-814, Cys-888, Cys-895, and Cys-898.

This sequence belongs to the RNA polymerase beta' chain family. As to quaternary structure, the RNAP catalytic core consists of 2 alpha, 1 beta, 1 beta' and 1 omega subunit. When a sigma factor is associated with the core the holoenzyme is formed, which can initiate transcription. Mg(2+) serves as cofactor. Requires Zn(2+) as cofactor.

The enzyme catalyses RNA(n) + a ribonucleoside 5'-triphosphate = RNA(n+1) + diphosphate. Functionally, DNA-dependent RNA polymerase catalyzes the transcription of DNA into RNA using the four ribonucleoside triphosphates as substrates. The sequence is that of DNA-directed RNA polymerase subunit beta' from Pseudomonas fluorescens (strain ATCC BAA-477 / NRRL B-23932 / Pf-5).